Consider the following 721-residue polypeptide: DNA ligase (721 aa).

Residues 39 to 43 (DAEYD), 89 to 90 (SL), and glutamate 123 each bind NAD(+). Residue lysine 125 is the N6-AMP-lysine intermediate of the active site. Positions 146, 186, 302, and 326 each coordinate NAD(+). Zn(2+)-binding residues include cysteine 418, cysteine 421, cysteine 436, and cysteine 442. The segment at 556-588 (QASSAAREGEPANADGAYDPATVTPDSDTAGAE) is disordered. The 81-residue stretch at 641-721 (TKDSAVAGKT…AWAEIVRQAG (81 aa)) folds into the BRCT domain.

It belongs to the NAD-dependent DNA ligase family. LigA subfamily. The cofactor is Mg(2+). Requires Mn(2+) as cofactor.

The catalysed reaction is NAD(+) + (deoxyribonucleotide)n-3'-hydroxyl + 5'-phospho-(deoxyribonucleotide)m = (deoxyribonucleotide)n+m + AMP + beta-nicotinamide D-nucleotide.. Functionally, DNA ligase that catalyzes the formation of phosphodiester linkages between 5'-phosphoryl and 3'-hydroxyl groups in double-stranded DNA using NAD as a coenzyme and as the energy source for the reaction. It is essential for DNA replication and repair of damaged DNA. The protein is DNA ligase of Novosphingobium aromaticivorans (strain ATCC 700278 / DSM 12444 / CCUG 56034 / CIP 105152 / NBRC 16084 / F199).